The chain runs to 482 residues: Early growth response protein 4 (482 aa).

The disordered stretch occupies residues 274–357 (DLGEGAESLP…PPAKARRKGR (84 aa)). The segment covering 280–290 (ESLPGLLTPPS) has biased composition (low complexity). The segment covering 291–302 (GEGGSSGEGGEF) has biased composition (gly residues). A compositionally biased stretch (pro residues) spans 337–349 (PEPPVPPPAPFPP). 3 consecutive C2H2-type zinc fingers follow at residues 376 to 400 (FACPVESCVRSFARSDELNRHLRIH), 406 to 428 (FQCRICLRNFSRSDHLTTHVRTH), and 434 to 456 (FACDVCGRRFARSDEKKRHSKVH).

This sequence belongs to the EGR C2H2-type zinc-finger protein family. In terms of tissue distribution, expressed in brain. In the cerebellum and frontal cortex.

Its subcellular location is the nucleus. Its function is as follows. Transcriptional regulator. Recognizes and binds to the DNA sequence 5'-GCGGGGGCG-3' (GSG). Activates the transcription of target genes whose products are required for mitogenesis and differentiation. This is Early growth response protein 4 (EGR4) from Bos taurus (Bovine).